The following is a 236-amino-acid chain: Ribosome maturation protein SDO1 homolog (236 aa).

Belongs to the SDO1/SBDS family.

The polypeptide is Ribosome maturation protein SDO1 homolog (Pyrococcus abyssi (strain GE5 / Orsay)).